We begin with the raw amino-acid sequence, 81 residues long: RNA-binding protein Hfq (81 aa).

The region spanning 11 to 71 (DIFLNNARKN…ISTITPTKPI (61 aa)) is the Sm domain.

Belongs to the Hfq family. Homohexamer.

Its function is as follows. RNA chaperone that binds small regulatory RNA (sRNAs) and mRNAs to facilitate mRNA translational regulation in response to envelope stress, environmental stress and changes in metabolite concentrations. Also binds with high specificity to tRNAs. The chain is RNA-binding protein Hfq from Clostridium beijerinckii (strain ATCC 51743 / NCIMB 8052) (Clostridium acetobutylicum).